A 342-amino-acid chain; its full sequence is L-threonine 3-dehydrogenase (342 aa).

Position 38 (cysteine 38) interacts with Zn(2+). Residues threonine 40 and histidine 43 each act as charge relay system in the active site. Residues histidine 63, glutamate 64, cysteine 93, cysteine 96, cysteine 99, and cysteine 107 each coordinate Zn(2+). NAD(+) is bound by residues isoleucine 175, aspartate 195, arginine 200, 262-264, and 286-287; these read LGL and IY.

It belongs to the zinc-containing alcohol dehydrogenase family. In terms of assembly, homotetramer. Requires Zn(2+) as cofactor.

The protein resides in the cytoplasm. It catalyses the reaction L-threonine + NAD(+) = (2S)-2-amino-3-oxobutanoate + NADH + H(+). The protein operates within amino-acid degradation; L-threonine degradation via oxydo-reductase pathway; glycine from L-threonine: step 1/2. Functionally, catalyzes the NAD(+)-dependent oxidation of L-threonine to 2-amino-3-ketobutyrate. In Streptomyces coelicolor (strain ATCC BAA-471 / A3(2) / M145), this protein is L-threonine 3-dehydrogenase.